Here is a 541-residue protein sequence, read N- to C-terminus: Glutamyl-tRNA(Gln) amidotransferase subunit A, chloroplastic/mitochondrial (541 aa).

Residues Lys121 and Ser196 each act as charge relay system in the active site. Ser220 (acyl-ester intermediate) is an active-site residue.

It belongs to the amidase family. GatA subfamily. Subunit of the heterotrimeric GatCAB amidotransferase (AdT) complex, composed of A, B and C subunits.

It localises to the mitochondrion. The protein resides in the plastid. The protein localises to the chloroplast stroma. The enzyme catalyses L-glutamyl-tRNA(Gln) + L-glutamine + ATP + H2O = L-glutaminyl-tRNA(Gln) + L-glutamate + ADP + phosphate + H(+). In terms of biological role, allows the formation of correctly charged Gln-tRNA(Gln) through the transamidation of misacylated Glu-tRNA(Gln) in chloroplasts and mitochondria. The reaction takes place in the presence of glutamine and ATP through an activated gamma-phospho-Glu-tRNA(Gln). This is Glutamyl-tRNA(Gln) amidotransferase subunit A, chloroplastic/mitochondrial from Sorghum bicolor (Sorghum).